The primary structure comprises 190 residues: UPF0725 protein At2g20625 (190 aa).

The protein belongs to the UPF0725 (EMB2204) family.

The chain is UPF0725 protein At2g20625 from Arabidopsis thaliana (Mouse-ear cress).